Here is a 254-residue protein sequence, read N- to C-terminus: Coproheme decarboxylase (254 aa).

Fe-coproporphyrin III-binding positions include Arg-136, 150–154 (YPMDK), His-177, Gln-190, and Ser-228. Residue Tyr-150 is part of the active site.

The protein belongs to the ChdC family. Type 1 subfamily. Fe-coproporphyrin III is required as a cofactor.

It catalyses the reaction Fe-coproporphyrin III + 2 H2O2 + 2 H(+) = heme b + 2 CO2 + 4 H2O. It carries out the reaction Fe-coproporphyrin III + H2O2 + H(+) = harderoheme III + CO2 + 2 H2O. The catalysed reaction is harderoheme III + H2O2 + H(+) = heme b + CO2 + 2 H2O. The protein operates within porphyrin-containing compound metabolism; protoheme biosynthesis. Involved in coproporphyrin-dependent heme b biosynthesis. Catalyzes the decarboxylation of Fe-coproporphyrin III (coproheme) to heme b (protoheme IX), the last step of the pathway. The reaction occurs in a stepwise manner with a three-propionate intermediate. The sequence is that of Coproheme decarboxylase from Bacillus licheniformis (strain ATCC 14580 / DSM 13 / JCM 2505 / CCUG 7422 / NBRC 12200 / NCIMB 9375 / NCTC 10341 / NRRL NRS-1264 / Gibson 46).